A 255-amino-acid polypeptide reads, in one-letter code: Tabinhibitin 1 (255 aa).

The signal sequence occupies residues 1–23; it reads MTSILVSRFLIAALVLQYATSDA. The SCP domain maps to 67-211; sequence LSKINDVRDH…KARALLTCNF (145 aa).

This sequence belongs to the CRISP family. As to expression, expressed in salivary glands.

Its subcellular location is the secreted. In terms of biological role, inhibits platelet aggregation induced by all agonists tested. May act by competing with fibrinogen for binding to glycoprotein IIb/IIIa (ITGA2B/ITGB3). In Tabanus yao (Horsefly), this protein is Tabinhibitin 1.